The sequence spans 856 residues: Phosphatidylglycerol lysyltransferase (856 aa).

Transmembrane regions (helical) follow at residues 7–27 (ALSILKIVFPIAVLLFVIYQS), 51–71 (LFMLVLIGLLAVAAMSLYDYV), 88–108 (VSWIANSFNNVLGFGGLAGVG), 128–148 (IAWLTSSMLLGLSVFSIFVAA), 161–181 (PWLWAVVIGFALILPLSLAVS), 208–228 (SVVEWLMAGTVIYFALFAMGI), 235–255 (VFGVFVIAAIGGMISLVPGGF), 280–300 (IVLYRLAYSFIPFILGLFFAA), 342–362 (SLSLIVFVAGLIVLASVSLPI), 375–395 (ALLLFNGLSLSSALILLILPI), 420–440 (FLKGLNISAIFVLPMIIVLLV), 459–479 (IFAVALFTVALFNYNLIAGFI), and 501–521 (HATIMAIIIVPLFFLIFTVVY).

The protein belongs to the LPG synthase family.

The protein localises to the cell membrane. It catalyses the reaction L-lysyl-tRNA(Lys) + a 1,2-diacyl-sn-glycero-3-phospho-(1'-sn-glycerol) = a 1,2-diacyl-sn-glycero-3-phospho-1'-(3'-O-L-lysyl)-sn-glycerol + tRNA(Lys). In terms of biological role, catalyzes the transfer of a lysyl group from L-lysyl-tRNA(Lys) to membrane-bound phosphatidylglycerol (PG), which produces lysylphosphatidylglycerol (LPG), one of the components of the bacterial membrane with a positive net charge. LPG synthesis contributes to the resistance to cationic antimicrobial peptides (CAMPs) and likely protects B.subtilis against its own CAMPs and against those produced by competiting microorganisms (bacteriocins). In fact, the modification of anionic phosphatidylglycerol with positively charged L-lysine results in repulsion of the peptides. The polypeptide is Phosphatidylglycerol lysyltransferase (mprF) (Bacillus subtilis (strain 168)).